The primary structure comprises 392 residues: Small ribosomal subunit protein uS9m (392 aa).

A compositionally biased stretch (low complexity) spans 8-25; it reads RSSRAMSSASPASASDSD. A disordered region spans residues 8-27; it reads RSSRAMSSASPASASDSDTS.

Belongs to the universal ribosomal protein uS9 family. Component of the mitochondrial ribosome small subunit (28S) which comprises a 12S rRNA and about 30 distinct proteins.

The protein localises to the mitochondrion. The polypeptide is Small ribosomal subunit protein uS9m (mrps-9) (Caenorhabditis elegans).